A 401-amino-acid chain; its full sequence is Formate dehydrogenase (401 aa).

Residues Ile123 and Asn147 each contribute to the substrate site. NAD(+) is bound by residues Ser148, 202–203 (RI), Asp222, 257–261 (PLHPE), Thr283, Asp309, 333–336 (HISG), and Ser381.

This sequence belongs to the D-isomer specific 2-hydroxyacid dehydrogenase family. FDH subfamily. As to quaternary structure, homodimer.

The protein resides in the cytoplasm. It catalyses the reaction formate + NAD(+) = CO2 + NADH. Functionally, catalyzes the NAD(+)-dependent oxidation of formate to carbon dioxide. Formate oxidation is the final step in the methanol oxidation pathway in methylotrophic microorganisms. Has a role in the detoxification of exogenous formate in non-methylotrophic organisms. The chain is Formate dehydrogenase from Pseudomonas sp. (strain 101) (Achromobacter parvulus T1).